The primary structure comprises 384 residues: S-adenosylmethionine synthase (384 aa).

Residue H15 coordinates ATP. Residue D17 coordinates Mg(2+). Position 43 (E43) interacts with K(+). 2 residues coordinate L-methionine: E56 and Q99. Residues 99–109 (QSPDINQGVDR) are flexible loop. ATP-binding positions include 164–166 (DAK), 230–231 (RF), D239, 245–246 (RK), A262, and K266. Residue D239 coordinates L-methionine. Residue K270 participates in L-methionine binding.

The protein belongs to the AdoMet synthase family. As to quaternary structure, homotetramer; dimer of dimers. Requires Mg(2+) as cofactor. It depends on K(+) as a cofactor.

The protein resides in the cytoplasm. It catalyses the reaction L-methionine + ATP + H2O = S-adenosyl-L-methionine + phosphate + diphosphate. Its pathway is amino-acid biosynthesis; S-adenosyl-L-methionine biosynthesis; S-adenosyl-L-methionine from L-methionine: step 1/1. Catalyzes the formation of S-adenosylmethionine (AdoMet) from methionine and ATP. The overall synthetic reaction is composed of two sequential steps, AdoMet formation and the subsequent tripolyphosphate hydrolysis which occurs prior to release of AdoMet from the enzyme. This Serratia proteamaculans (strain 568) protein is S-adenosylmethionine synthase.